Here is a 256-residue protein sequence, read N- to C-terminus: Glutamate racemase (256 aa).

Residues Asp11–Ser12 and Tyr43–Gly44 contribute to the substrate site. Cys74 serves as the catalytic Proton donor/acceptor. Substrate is bound at residue Asn75 to Thr76. Cys182 (proton donor/acceptor) is an active-site residue. Residue Thr183 to His184 participates in substrate binding.

The protein belongs to the aspartate/glutamate racemases family.

It catalyses the reaction L-glutamate = D-glutamate. It participates in cell wall biogenesis; peptidoglycan biosynthesis. Functionally, provides the (R)-glutamate required for cell wall biosynthesis. The sequence is that of Glutamate racemase from Leptospira interrogans serogroup Icterohaemorrhagiae serovar copenhageni (strain Fiocruz L1-130).